A 648-amino-acid polypeptide reads, in one-letter code: Transcriptional regulator ManR (648 aa).

2 consecutive PRD domains span residues lysine 187 to glutamine 292 and leucine 297 to serine 404. Phosphohistidine; by HPr is present on residues histidine 222, histidine 281, histidine 334, and histidine 393. Residues lysine 409–arginine 500 enclose the PTS EIIB type-2 domain. Position 415 is a phosphocysteine; by EIIA (cysteine 415). A PTS EIIA type-2 domain is found at asparagine 510–tyrosine 648. Histidine 570 bears the Phosphohistidine; by EIIB mark.

This sequence belongs to the transcriptional antiterminator BglG family.

The enzyme catalyses D-mannose(out) + N(pros)-phospho-L-histidyl-[protein] = D-mannose 6-phosphate(in) + L-histidyl-[protein]. Its activity is regulated as follows. The regulatory activity of ManR is modulated by phosphorylation and dephosphorylation of the various ManR domains. It becomes activated via phosphoryl group transfer from PEP, EI and HPr on the two conserved histidine residues in the PRD 2 domain, whereas phosphorylation of the EIIA-like domain on His-570 by the PTS EIIB-Man domain of ManP inactivates ManR. In terms of biological role, positively regulates the expression of the mannose operon that consists of three genes, manP, manA, and yjdF, which are responsible for the transport and utilization of mannose. Also activates its own expression. The chain is Transcriptional regulator ManR (manR) from Bacillus subtilis (strain 168).